Here is a 284-residue protein sequence, read N- to C-terminus: 4-diphosphocytidyl-2-C-methyl-D-erythritol kinase (284 aa).

Lys-14 is a catalytic residue. An ATP-binding site is contributed by 98-108 (PMGGGIGGGSS). Asp-140 is an active-site residue.

This sequence belongs to the GHMP kinase family. IspE subfamily.

It catalyses the reaction 4-CDP-2-C-methyl-D-erythritol + ATP = 4-CDP-2-C-methyl-D-erythritol 2-phosphate + ADP + H(+). It functions in the pathway isoprenoid biosynthesis; isopentenyl diphosphate biosynthesis via DXP pathway; isopentenyl diphosphate from 1-deoxy-D-xylulose 5-phosphate: step 3/6. Functionally, catalyzes the phosphorylation of the position 2 hydroxy group of 4-diphosphocytidyl-2C-methyl-D-erythritol. This chain is 4-diphosphocytidyl-2-C-methyl-D-erythritol kinase, found in Shewanella loihica (strain ATCC BAA-1088 / PV-4).